Here is a 1338-residue protein sequence, read N- to C-terminus: Thioester-containing protein 1 allele S3 (1338 aa).

A signal peptide spans 1 to 21 (MWQFIRSRILTVIIFIGAAHG). N-linked (GlcNAc...) asparagine glycosylation is found at Asn-68, Asn-199, Asn-242, Asn-312, and Asn-481. Residues 580-609 (ENEFDIFHSLGLFARTLDDILFDSANEKTG) are may contain the cleavage site. Asn-637, Asn-728, Asn-813, and Asn-828 each carry an N-linked (GlcNAc...) asparagine glycan. Positions 859–862 (CGEQ) form a cross-link, isoglutamyl cysteine thioester (Cys-Gln). Disulfide bonds link Cys-1217–Cys-1283, Cys-1326–Cys-1338, and Cys-1329–Cys-1334.

Heterodimer of a TEP1-N chain and an TEP1-C chain non-covalently linked. Forms a complex composed of TEP1-N and TEP1-C heterodimer, LRIM1 and APL1C; the interaction stabilizes TEP1-N and TEP1-C heterodimer, prevents its binding to tissues while circulating in the hemolymph and protects the thioester bond from hydrolysis. Mature TEP1 and to a lesser extent full-length TEP1 interact with SPCLIP1; the interaction is induced by microbial infection. In terms of processing, in the hemolymph, the full-length protein is cleaved by an unknow protease into a 75kDa N-terminal (TEP1-N) chain and an 80kDa C-terminal (TEP1-C) chain which remain non-covalently linked. The TEP1-C chain contains the thioester bond which covalently binds to the pathogen surface. Cleavage is induced by bacterial infection or aseptic wound injury. During embryonic and pupal development, the cleaved form is the predominant form. Post-translationally, N-glycosylated.

It localises to the secreted. Functionally, plays an essential role in the innate immune response against bacteria, fungi and protozoa infection. After proteolytic cleavage, the protein C-terminus binds covalently through a thioester bond to the pathogen surface resulting in pathogen clearance either by melanization or lysis. Initiate the recruitment and activation of a cascade of proteases, mostly of CLIP-domain serine proteases, which leads to the proteolytic cleavage of the prophenoloxidase (PPO) into active phenoloxidase (PO), the rate-limiting enzyme in melanin biosynthesis. In response to parasite P.berghei-mediated infection, binds to and mediates killing of ookinetes, as they egress from midgut epithelial cells into the basal labyrinth, by both lysis and melanization. During bacterial infection, binds to both Gram-positive and Gram-negative bacteria but only promotes phagocytosis of Gram-negative bacteria. Promotes the accumulation of SPCLIP1 onto the surface of P.berghei ookinetes and bacterium E.coli which leads to the melanization of the pathogen. Recruits CLIPA2 to bacteria surface. In response to bacterial infection, required for periostial hemocyte aggregation, but not for the aggregation of sessile hemocytes in non-periostial regions. During the late stage of fungus B.bassiana-mediated infection, required for the initiation of hyphae melanization by binding to the surface of hyphae and recruiting prophenoloxidase PPO to them. Plays a role in male fertility by binding to defective sperm cells and promoting their removal during spermatogenesis. Binds to and mediates killing of parasite P.bergei ookinetes by lysis. Its function is as follows. Binds covalently through a thioester bond to the pathogen surface resulting in pathogen clearance. This chain is Thioester-containing protein 1 allele S3, found in Anopheles gambiae (African malaria mosquito).